A 699-amino-acid polypeptide reads, in one-letter code: Polyribonucleotide nucleotidyltransferase (699 aa).

The Mg(2+) site is built by aspartate 488 and aspartate 494. The KH domain maps to 555-614; the sequence is PRIYSIKVNPDKIKDVIGKGGSVIRSLTEETNTIIDIEDNGIIKIVALDYDKAKQAIRRI. The region spanning 624–692 is the S1 motif domain; sequence GAVYTGKVSH…RQGRIRLSMK (69 aa).

This sequence belongs to the polyribonucleotide nucleotidyltransferase family. As to quaternary structure, component of the RNA degradosome, which is a multiprotein complex involved in RNA processing and mRNA degradation. Requires Mg(2+) as cofactor.

It localises to the cytoplasm. It catalyses the reaction RNA(n+1) + phosphate = RNA(n) + a ribonucleoside 5'-diphosphate. Involved in mRNA degradation. Catalyzes the phosphorolysis of single-stranded polyribonucleotides processively in the 3'- to 5'-direction. The protein is Polyribonucleotide nucleotidyltransferase of Blochmanniella pennsylvanica (strain BPEN).